A 395-amino-acid chain; its full sequence is Tryptophan synthase beta chain (395 aa).

Lysine 86 bears the N6-(pyridoxal phosphate)lysine mark.

It belongs to the TrpB family. In terms of assembly, tetramer of two alpha and two beta chains. The cofactor is pyridoxal 5'-phosphate.

It carries out the reaction (1S,2R)-1-C-(indol-3-yl)glycerol 3-phosphate + L-serine = D-glyceraldehyde 3-phosphate + L-tryptophan + H2O. The protein operates within amino-acid biosynthesis; L-tryptophan biosynthesis; L-tryptophan from chorismate: step 5/5. In terms of biological role, the beta subunit is responsible for the synthesis of L-tryptophan from indole and L-serine. In Pseudoalteromonas atlantica (strain T6c / ATCC BAA-1087), this protein is Tryptophan synthase beta chain.